Consider the following 396-residue polypeptide: MAKAKFERTKPHVNIGTIGHVDHGKTTLTAAITKVLAGKGQAEFKAFDQIDNAPEERERGITIATAHVEYETDKRHYAHVDCPGHADYVKNMITGAAQMDGAILVVSAADGPMPQTREHILLARQVGVPYIVVYLNKADMVDDEELLELVELEIRELLSSYDFPGDDIPIVKGSALKALEGEKSELGEDSIIKLMDAVDSYIPDPERAVDKPFLMPVEDVFSISGRGTVATGRVERGIVKVGEEVEIVGIKATAKTTVTGVEMFRKLLDEGRAGDNIGALLRGIKREEIERGQVLAKPGSITPHTKFKAEAYILNKEEGGRHTPFFNGYRPQFYFRTTDVTGIVDLPAGTEMVMPGDNVAVTVNLITPIAMDEGLRFAIREGGRTVGAGVVSSIIE.

The 197-residue stretch at 10–206 (KPHVNIGTIG…AVDSYIPDPE (197 aa)) folds into the tr-type G domain. The tract at residues 19–26 (GHVDHGKT) is G1. 19–26 (GHVDHGKT) provides a ligand contact to GTP. Thr26 contacts Mg(2+). The G2 stretch occupies residues 60-64 (GITIA). The tract at residues 81 to 84 (DCPG) is G3. GTP contacts are provided by residues 81–85 (DCPGH) and 136–139 (NKAD). The interval 136–139 (NKAD) is G4. Residues 174–176 (SAL) form a G5 region.

Belongs to the TRAFAC class translation factor GTPase superfamily. Classic translation factor GTPase family. EF-Tu/EF-1A subfamily. As to quaternary structure, monomer.

Its subcellular location is the cytoplasm. It catalyses the reaction GTP + H2O = GDP + phosphate + H(+). Functionally, GTP hydrolase that promotes the GTP-dependent binding of aminoacyl-tRNA to the A-site of ribosomes during protein biosynthesis. The chain is Elongation factor Tu from Pelobacter propionicus (strain DSM 2379 / NBRC 103807 / OttBd1).